A 66-amino-acid chain; its full sequence is Large ribosomal subunit protein bL35 (66 aa).

Residues 1 to 26 show a composition bias toward basic residues; that stretch reads MPKMKTHRGAAKRVKRTGSGKLKRSR. The segment at 1–49 is disordered; that stretch reads MPKMKTHRGAAKRVKRTGSGKLKRSRAFTSHLFANKSTKQKRKLRKASL.

It belongs to the bacterial ribosomal protein bL35 family.

The sequence is that of Large ribosomal subunit protein bL35 from Staphylococcus saprophyticus subsp. saprophyticus (strain ATCC 15305 / DSM 20229 / NCIMB 8711 / NCTC 7292 / S-41).